A 315-amino-acid polypeptide reads, in one-letter code: Initiation factor TFIIB homolog (315 aa).

Belongs to the asfivirus C315R family.

Functionally, putative initation factor. The chain is Initiation factor TFIIB homolog from African swine fever virus (strain Badajoz 1971 Vero-adapted) (Ba71V).